We begin with the raw amino-acid sequence, 234 residues long: Endonuclease V (234 aa).

Aspartate 36 and aspartate 104 together coordinate Mg(2+).

It belongs to the endonuclease V family. Requires Mg(2+) as cofactor.

It localises to the cytoplasm. The catalysed reaction is Endonucleolytic cleavage at apurinic or apyrimidinic sites to products with a 5'-phosphate.. Functionally, DNA repair enzyme involved in the repair of deaminated bases. Selectively cleaves double-stranded DNA at the second phosphodiester bond 3' to a deoxyinosine leaving behind the intact lesion on the nicked DNA. The protein is Endonuclease V of Yersinia pestis.